The primary structure comprises 88 residues: Exodeoxyribonuclease 7 small subunit (88 aa).

The disordered stretch occupies residues 69–88; it reads DPMRPDDGEPFDPSIVSTSQ.

The protein belongs to the XseB family. Heterooligomer composed of large and small subunits.

Its subcellular location is the cytoplasm. The enzyme catalyses Exonucleolytic cleavage in either 5'- to 3'- or 3'- to 5'-direction to yield nucleoside 5'-phosphates.. Its function is as follows. Bidirectionally degrades single-stranded DNA into large acid-insoluble oligonucleotides, which are then degraded further into small acid-soluble oligonucleotides. The polypeptide is Exodeoxyribonuclease 7 small subunit (Xylella fastidiosa (strain M12)).